The chain runs to 317 residues: Lipase 1 (317 aa).

Residues 1–18 form the signal peptide; it reads MLLKRLCFAALFSLSMVG. Cysteine 19 carries N-palmitoyl cysteine lipidation. A lipid anchor (S-diacylglycerol cysteine) is attached at cysteine 19. Residues 69 to 296 form the AB hydrolase-1 domain; it reads PLLLIHGFGG…MEDVGHVPMV (228 aa). The active site involves histidine 74. The active-site Nucleophile is serine 142. Catalysis depends on charge relay system residues glutamate 270 and histidine 292.

Its subcellular location is the cell outer membrane. It catalyses the reaction a triacylglycerol + H2O = a diacylglycerol + a fatty acid + H(+). This Psychrobacter immobilis protein is Lipase 1 (lip1).